The following is a 154-amino-acid chain: Aspartate 1-decarboxylase 1 (154 aa).

Ser-26 (schiff-base intermediate with substrate; via pyruvic acid) is an active-site residue. Ser-26 carries the post-translational modification Pyruvic acid (Ser). Thr-58 contributes to the substrate binding site. Residue Tyr-59 is the Proton donor of the active site. Substrate is bound at residue 74 to 76; the sequence is GAA. The interval 129–154 is disordered; that stretch reads VGLVRGDTNSPQPSLSEQAGDPRRAQ. Over residues 135-145 the composition is skewed to polar residues; that stretch reads DTNSPQPSLSE.

Belongs to the PanD family. In terms of assembly, heterooctamer of four alpha and four beta subunits. It depends on pyruvate as a cofactor. Is synthesized initially as an inactive proenzyme, which is activated by self-cleavage at a specific serine bond to produce a beta-subunit with a hydroxyl group at its C-terminus and an alpha-subunit with a pyruvoyl group at its N-terminus.

The protein localises to the cytoplasm. It catalyses the reaction L-aspartate + H(+) = beta-alanine + CO2. It functions in the pathway cofactor biosynthesis; (R)-pantothenate biosynthesis; beta-alanine from L-aspartate: step 1/1. Functionally, catalyzes the pyruvoyl-dependent decarboxylation of aspartate to produce beta-alanine. This Frankia casuarinae (strain DSM 45818 / CECT 9043 / HFP020203 / CcI3) protein is Aspartate 1-decarboxylase 1.